The primary structure comprises 195 residues: Rubrerythrin (195 aa).

One can recognise a Ferritin-like diiron domain in the interval Met1 to Lys150. Fe(3+) contacts are provided by Glu20, Glu53, Glu98, Glu101, Glu132, His135, Cys162, Cys165, Cys178, and Cys181. In terms of domain architecture, Rubredoxin-like spans Val157–Tyr195.

In terms of assembly, homodimer. Possesses two rubredoxin-like centers and two non-sulfur oxo-bridged di-iron centers per dimer. Fe(3+) is required as a cofactor.

The protein resides in the cytoplasm. In terms of biological role, may provide oxidative stress protection via catalytic reduction of intracellular hydrogen peroxide. The protein is Rubrerythrin (rbr) of Clostridium perfringens (strain 13 / Type A).